Reading from the N-terminus, the 465-residue chain is UDP-N-acetylmuramate--L-alanine ligase (465 aa).

112–118 (GTHGKTT) lines the ATP pocket.

The protein belongs to the MurCDEF family.

The protein localises to the cytoplasm. It carries out the reaction UDP-N-acetyl-alpha-D-muramate + L-alanine + ATP = UDP-N-acetyl-alpha-D-muramoyl-L-alanine + ADP + phosphate + H(+). The protein operates within cell wall biogenesis; peptidoglycan biosynthesis. Cell wall formation. The sequence is that of UDP-N-acetylmuramate--L-alanine ligase from Burkholderia cenocepacia (strain HI2424).